The following is a 219-amino-acid chain: Transmembrane protein 247 (219 aa).

2 stretches are compositionally biased toward basic and acidic residues: residues 1–10 and 29–45; these read MAAEDREMME and SKSE…ESQK. A disordered region spans residues 1–101; that stretch reads MAAEDREMME…LPPTPGTERN (101 aa). Residues 121–156 adopt a coiled-coil conformation; it reads LHEKNQRQRQHEVVMEQLQRERQHEVVMEQLQQEAA. Helical transmembrane passes span 167–187 and 194–214; these read FLLP…IHII and VFFL…LCLI.

It localises to the membrane. The sequence is that of Transmembrane protein 247 (TMEM247) from Homo sapiens (Human).